Consider the following 249-residue polypeptide: Receptor-transporting protein 4 (249 aa).

The Cytoplasmic segment spans residues 1-227; that stretch reads MLFPDDFSTW…QGCREPPQRE (227 aa). The segment at 50-162 adopts a 3CxxC-type zinc-finger fold; the sequence is TVLGRFQCSR…DTRNCEACSL (113 aa). A disordered region spans residues 173–208; the sequence is KVKPPRSPSPLPKSSSPSKSCPPPPQTRNTDFGNKT. The segment covering 199-208 has biased composition (polar residues); that stretch reads TRNTDFGNKT. Residues 228–248 traverse the membrane as a helical segment; the sequence is IEPPLFLFLSIAAFALFSLFT.

This sequence belongs to the TMEM7 family. Interacts with TASR16. Interacts with OPRD1 and OPRM1; the interaction promotes cell surface localization of the OPDR1-OPRM1 heterodimer. As to expression, expressed at low levels in olfactory neurons. Upon viral infection, highly expressed in brain and different cells of nervous tissue.

It localises to the membrane. The protein localises to the cytoplasm. Functionally, chaperone protein that facilitates the trafficking and functional cell surface expression of some G-protein coupled receptors (GPCRs). Promotes functional expression of the bitter taste receptor TAS2R16. Also promotes functional expression of the opioid receptor heterodimer OPRD1-OPRM1. In addition, acts as a potent IFN-inducible suppressor of pathogens including lyssavirus rabies, influenza A or yellow fever virus. Mechanistically, associates with the viral replicase, binds viral RNA, and thereby suppresses viral genome amplification that replicates at the endoplasmic reticulum. In addition, restores antiviral signaling by interacting with and sequestering influenza virus protein NS1. In Mus musculus (Mouse), this protein is Receptor-transporting protein 4 (Rtp4).